Reading from the N-terminus, the 653-residue chain is ATP-dependent rRNA helicase SPB4 (653 aa).

Positions 17 to 45 (WQALTPPLSEWILDAVAAMGFTRMTPVQA) match the Q motif motif. The Helicase ATP-binding domain maps to 48–257 (IPLFMGHKDV…RVGLRNPVKI (210 aa)). 61–68 (AVTGSGKT) is a binding site for ATP. The DEAD box signature appears at 205-208 (DEAD). Residues 291–444 (AIRQILNSID…SPPVALSDTL (154 aa)) enclose the Helicase C-terminal domain. The disordered stretch occupies residues 534-653 (KQREKHRQES…DGESEFEGFD (120 aa)). Polar residues predominate over residues 558 to 569 (PSSSSNNDTAPW). Residues 571–627 (KTLEKKSDKEKRRERKRAKKEREHWEKMTEEEKTKSRETHQMLEELRKKNRQELNAK) are a coiled coil. 2 stretches are compositionally biased toward basic and acidic residues: residues 572–581 (TLEKKSDKEK) and 590–626 (KERE…ELNA). Residues 627–636 (KSHTSSSVLS) are compositionally biased toward polar residues. The span at 641 to 653 (AELDGESEFEGFD) shows a compositional bias: acidic residues.

Belongs to the DEAD box helicase family. DDX55/SPB4 subfamily. Component of pre-60S ribosomal complexes.

The protein localises to the nucleus. Its subcellular location is the nucleolus. It catalyses the reaction ATP + H2O = ADP + phosphate + H(+). In terms of biological role, ATP-binding RNA helicase involved in the biogenesis of 60S ribosomal subunits. Binds 90S pre-ribosomal particles and dissociates from pre-60S ribosomal particles after processing of 27SB pre-rRNA. Required for the normal formation of 18S rRNA through the processing of pre-rRNAs at sites A0, A1 and A2, and the normal formation of 25S and 5.8S rRNAs through the processing of pre-rRNAs at sites C1 and C2. The sequence is that of ATP-dependent rRNA helicase SPB4 from Coccidioides immitis (strain RS) (Valley fever fungus).